We begin with the raw amino-acid sequence, 260 residues long: Kallikrein-8 (260 aa).

The signal sequence occupies residues M1–A28. Positions Q29–K32 are excised as a propeptide. In terms of domain architecture, Peptidase S1 spans V33–G257. Intrachain disulfides connect C39–C173, C58–C74, C145–C246, C152–C218, C184–C198, and C208–C233. The active-site Charge relay system is H73. N110 is a glycosylation site (N-linked (GlcNAc...) asparagine). D120 acts as the Charge relay system in catalysis. The active-site Charge relay system is S212.

Belongs to the peptidase S1 family. Kallikrein subfamily. In terms of assembly, interacts with SPINK9. As to expression, isoform 1 is predominantly expressed in the pancreas. Isoform 2 is expressed in adult brain and hippocampus. Isoform 1 and isoform 2 are found in fetal brain and placenta. Detected in salivary gland, uterus, thymus, breast, testis and kidney but not in spleen, liver, lung or normal ovarian tissue. Displays an 11.5-fold increase in Alzheimer disease hippocampus compared to controls and is overexpressed in some ovarian carcinomas. Expressed at low levels in normal skin while high levels are found in psoriasis vulgaris, seborrheic keratosis, lichen planus and squamous cell carcinoma skin samples. Expressed in the keratinocytes.

It is found in the secreted. The protein resides in the cytoplasm. It carries out the reaction Cleavage of amide substrates following the basic amino acids Arg or Lys at the P1 position, with a preference for Arg over Lys.. Its activity is regulated as follows. Inhibited by a range of serine protease inhibitors including antipain, aprotinin, leupeptin, benzamidine and soybean trypsin inhibitor. Serine protease which is capable of degrading a number of proteins such as casein, fibrinogen, kininogen, fibronectin and collagen type IV. Also cleaves L1CAM in response to increased neural activity. Induces neurite outgrowth and fasciculation of cultured hippocampal neurons. Plays a role in the formation and maturation of orphan and small synaptic boutons in the Schaffer-collateral pathway, regulates Schaffer-collateral long-term potentiation in the hippocampus and is required for memory acquisition and synaptic plasticity. Involved in skin desquamation and keratinocyte proliferation. Plays a role in the secondary phase of pathogenesis following spinal cord injury. In Homo sapiens (Human), this protein is Kallikrein-8 (KLK8).